Reading from the N-terminus, the 365-residue chain is Ubiquitin carboxyl-terminal hydrolase 4 (365 aa).

Residue Gly2 is the site of N-myristoyl glycine attachment. A USP domain is found at 23-362; that stretch reads FGFENFGNTC…HGYILLYESL (340 aa). The active-site Nucleophile is the Cys32. The short motif at 81–98 is the Bipartite nuclear localization signal element; sequence KKKTGVIAPKRFVQRLKK. His310 functions as the Proton acceptor in the catalytic mechanism.

It belongs to the peptidase C19 family. In terms of tissue distribution, constitutively and ubiquitously expressed.

It localises to the nucleus. The catalysed reaction is Thiol-dependent hydrolysis of ester, thioester, amide, peptide and isopeptide bonds formed by the C-terminal Gly of ubiquitin (a 76-residue protein attached to proteins as an intracellular targeting signal).. In terms of biological role, recognizes and hydrolyzes the peptide bond at the C-terminal Gly of ubiquitin. Involved in the processing of poly-ubiquitin precursors as well as that of ubiquitinated proteins. Required for the correct development of pollen. The polypeptide is Ubiquitin carboxyl-terminal hydrolase 4 (UBP4) (Arabidopsis thaliana (Mouse-ear cress)).